Here is a 259-residue protein sequence, read N- to C-terminus: Phosphate import ATP-binding protein PstB 1 (259 aa).

Residues 13-254 (IETKDVDLFY…PAEKETEDYI (242 aa)) enclose the ABC transporter domain. An ATP-binding site is contributed by 45 to 52 (GPSGCGKS).

The protein belongs to the ABC transporter superfamily. Phosphate importer (TC 3.A.1.7) family. As to quaternary structure, the complex is composed of two ATP-binding proteins (PstB), two transmembrane proteins (PstC and PstA) and a solute-binding protein (PstS).

Its subcellular location is the cell membrane. The catalysed reaction is phosphate(out) + ATP + H2O = ADP + 2 phosphate(in) + H(+). In terms of biological role, part of the ABC transporter complex PstSACB involved in phosphate import. Responsible for energy coupling to the transport system. This Listeria innocua serovar 6a (strain ATCC BAA-680 / CLIP 11262) protein is Phosphate import ATP-binding protein PstB 1.